Here is a 429-residue protein sequence, read N- to C-terminus: 3-phosphoshikimate 1-carboxyvinyltransferase (429 aa).

3-phosphoshikimate contacts are provided by Lys23, Ser24, and Arg28. Residue Lys23 coordinates phosphoenolpyruvate. Residues Gly95 and Arg123 each coordinate phosphoenolpyruvate. Ser168, Gln170, Asp316, and Lys343 together coordinate 3-phosphoshikimate. Gln170 contacts phosphoenolpyruvate. Residue Asp316 is the Proton acceptor of the active site. 2 residues coordinate phosphoenolpyruvate: Arg347 and Arg389.

Belongs to the EPSP synthase family. In terms of assembly, monomer.

The protein localises to the cytoplasm. It carries out the reaction 3-phosphoshikimate + phosphoenolpyruvate = 5-O-(1-carboxyvinyl)-3-phosphoshikimate + phosphate. It participates in metabolic intermediate biosynthesis; chorismate biosynthesis; chorismate from D-erythrose 4-phosphate and phosphoenolpyruvate: step 6/7. Its function is as follows. Catalyzes the transfer of the enolpyruvyl moiety of phosphoenolpyruvate (PEP) to the 5-hydroxyl of shikimate-3-phosphate (S3P) to produce enolpyruvyl shikimate-3-phosphate and inorganic phosphate. The polypeptide is 3-phosphoshikimate 1-carboxyvinyltransferase (Bacillus cereus (strain G9842)).